A 415-amino-acid polypeptide reads, in one-letter code: Corticotropin-releasing factor receptor 1 (415 aa).

Positions 1–23 (MGQRPQLRLVKALLLLGLNPVST) are cleaved as a signal peptide. Residues 24–111 (SLQDQQCESL…CQEILNEEKK (88 aa)) lie on the Extracellular side of the membrane. 3 disulfides stabilise this stretch: Cys-30-Cys-54, Cys-44-Cys-87, and Cys-68-Cys-102. N-linked (GlcNAc...) asparagine glycosylation is found at Asn-38, Asn-45, Asn-78, Asn-90, and Asn-98. The important for peptide agonist binding stretch occupies residues 99 to 108 (YSECQEILNE). A helical membrane pass occupies residues 112 to 142 (SKVHYHIAVIINYLGHCISLVALLVAFVLFL). The Cytoplasmic segment spans residues 143 to 149 (RLRSIRC). Residues 150–174 (LRNIIHWNLISAFILRNATWFVVQL) form a helical membrane-spanning segment. At 175 to 189 (TVSPEVHQSNVAWCR) the chain is on the extracellular side. Cysteines 188 and 258 form a disulfide. The chain crosses the membrane as a helical span at residues 190–218 (LVTAAYNYFHVTNFFWMFGEGCYLHTAIV). Topologically, residues 219–225 (LTYSTDR) are cytoplasmic. A helical membrane pass occupies residues 226–253 (LRKWMFVCIGWGVPFPIIVAWAIGKLYY). The Extracellular portion of the chain corresponds to 254-269 (DNEKCWFGKRPGVYTD). Residues 270-295 (YIYQGPMILVLLINFIFLFNIVRILM) traverse the membrane as a helical segment. The segment at 280-290 (LLINFIFLFNI) is important for antagonist binding. Over 296-306 (TKLRASTTSET) the chain is Cytoplasmic. Phosphoserine; by PKA is present on Ser-301. A helical membrane pass occupies residues 307 to 331 (IQYRKAVKATLVLLPLLGITYMLFF). Residues 332-338 (VNPGEDE) lie on the Extracellular side of the membrane. The chain crosses the membrane as a helical span at residues 339 to 368 (VSRVVFIYFNSFLESFQGFFVSVFYCFLNS). Topologically, residues 369-415 (EVRSAIRKRWRRWQDKHSIRARVARAMSIPTSPTRVSFHSIKQSTAV) are cytoplasmic.

It belongs to the G-protein coupled receptor 2 family. In terms of assembly, heterodimer; heterodimerizes with GPER1. Interacts (via N-terminal extracellular domain) with CRH and UCN. Interacts with DLG1; this inhibits endocytosis of CRHR1 after agonist binding. In terms of processing, C-terminal Ser or Thr residues may be phosphorylated. Post-translationally, phosphorylation at Ser-301 by PKA prevents maximal coupling to Gq-protein, and thereby negatively regulates downstream signaling. Detected in brain cortex (at protein level).

The protein localises to the cell membrane. The protein resides in the endosome. Functionally, G-protein coupled receptor for CRH (corticotropin-releasing factor) and UCN (urocortin). Has high affinity for CRH and UCN. Ligand binding causes a conformation change that triggers signaling via guanine nucleotide-binding proteins (G proteins) and down-stream effectors, such as adenylate cyclase. Promotes the activation of adenylate cyclase, leading to increased intracellular cAMP levels. Inhibits the activity of the calcium channel CACNA1H. Required for normal embryonic development of the adrenal gland and for normal hormonal responses to stress. Plays a role in the response to anxiogenic stimuli. The sequence is that of Corticotropin-releasing factor receptor 1 (Crhr1) from Mus musculus (Mouse).